A 331-amino-acid chain; its full sequence is Glycerol-3-phosphate dehydrogenase [NAD(P)+] (331 aa).

Residues tryptophan 11, arginine 30, and lysine 105 each contribute to the NADPH site. Residues lysine 105, glycine 134, and serine 136 each coordinate sn-glycerol 3-phosphate. Alanine 138 is an NADPH binding site. Lysine 189, aspartate 242, serine 252, arginine 253, and asparagine 254 together coordinate sn-glycerol 3-phosphate. Lysine 189 acts as the Proton acceptor in catalysis. Arginine 253 serves as a coordination point for NADPH. NADPH is bound by residues valine 277 and glutamate 279.

Belongs to the NAD-dependent glycerol-3-phosphate dehydrogenase family.

Its subcellular location is the cytoplasm. It catalyses the reaction sn-glycerol 3-phosphate + NAD(+) = dihydroxyacetone phosphate + NADH + H(+). The enzyme catalyses sn-glycerol 3-phosphate + NADP(+) = dihydroxyacetone phosphate + NADPH + H(+). It functions in the pathway membrane lipid metabolism; glycerophospholipid metabolism. Its function is as follows. Catalyzes the reduction of the glycolytic intermediate dihydroxyacetone phosphate (DHAP) to sn-glycerol 3-phosphate (G3P), the key precursor for phospholipid synthesis. The polypeptide is Glycerol-3-phosphate dehydrogenase [NAD(P)+] (Janthinobacterium sp. (strain Marseille) (Minibacterium massiliensis)).